The chain runs to 375 residues: Serpin B5 (375 aa).

Asn99, Asn133, Asn188, Asn298, and Asn361 each carry an N-linked (GlcNAc...) asparagine glycan.

It belongs to the serpin family. Ov-serpin subfamily. Interacts with IRF6.

It localises to the secreted. Its subcellular location is the extracellular space. Tumor suppressor. It blocks the growth, invasion, and metastatic properties of mammary tumors. As it does not undergo the S (stressed) to R (relaxed) conformational transition characteristic of active serpins, it exhibits no serine protease inhibitory activity. The polypeptide is Serpin B5 (Serpinb5) (Rattus norvegicus (Rat)).